The sequence spans 143 residues: Large ribosomal subunit protein uL13 (143 aa).

Belongs to the universal ribosomal protein uL13 family. As to quaternary structure, part of the 50S ribosomal subunit.

In terms of biological role, this protein is one of the early assembly proteins of the 50S ribosomal subunit, although it is not seen to bind rRNA by itself. It is important during the early stages of 50S assembly. This is Large ribosomal subunit protein uL13 from Dehalococcoides mccartyi (strain CBDB1).